Reading from the N-terminus, the 141-residue chain is MSLERTFSIIKPDAVERNLIGKILARFEQSGFEIVAAKMVRLTKAQAEGFYAEHQGKPFFEDLVEYMVSAPILVSVLQKENAVKDYRTLIGATDPAKAKEGTVRKEFAESLRRNSVHGSDSLESAAREIAYFFIDSEICSR.

6 residues coordinate ATP: Lys11, Phe59, Arg87, Thr93, Arg104, and Asn114. His117 functions as the Pros-phosphohistidine intermediate in the catalytic mechanism.

The protein belongs to the NDK family. In terms of assembly, homotetramer. Requires Mg(2+) as cofactor.

Its subcellular location is the cytoplasm. It carries out the reaction a 2'-deoxyribonucleoside 5'-diphosphate + ATP = a 2'-deoxyribonucleoside 5'-triphosphate + ADP. It catalyses the reaction a ribonucleoside 5'-diphosphate + ATP = a ribonucleoside 5'-triphosphate + ADP. Its function is as follows. Major role in the synthesis of nucleoside triphosphates other than ATP. The ATP gamma phosphate is transferred to the NDP beta phosphate via a ping-pong mechanism, using a phosphorylated active-site intermediate. This is Nucleoside diphosphate kinase from Mannheimia succiniciproducens (strain KCTC 0769BP / MBEL55E).